A 281-amino-acid polypeptide reads, in one-letter code: Shikimate dehydrogenase (NADP(+)) (281 aa).

Residues 15 to 17 (SKS) and Thr62 each bind shikimate. The active-site Proton acceptor is Lys66. Positions 87 and 102 each coordinate shikimate. NADP(+)-binding positions include 127–131 (GAGGS), 151–156 (NRTPER), and Leu217. Residue Tyr219 coordinates shikimate. Position 241 (Gly241) interacts with NADP(+).

This sequence belongs to the shikimate dehydrogenase family. As to quaternary structure, homodimer.

It catalyses the reaction shikimate + NADP(+) = 3-dehydroshikimate + NADPH + H(+). It participates in metabolic intermediate biosynthesis; chorismate biosynthesis; chorismate from D-erythrose 4-phosphate and phosphoenolpyruvate: step 4/7. Its function is as follows. Involved in the biosynthesis of the chorismate, which leads to the biosynthesis of aromatic amino acids. Catalyzes the reversible NADPH linked reduction of 3-dehydroshikimate (DHSA) to yield shikimate (SA). The chain is Shikimate dehydrogenase (NADP(+)) from Stenotrophomonas maltophilia (strain R551-3).